Consider the following 159-residue polypeptide: Large ribosomal subunit protein bL35c (159 aa).

The transit peptide at 1–86 (MAMASATATL…TSSPSFTVFA (86 aa)) directs the protein to the chloroplast.

In terms of assembly, component of the chloroplast large ribosomal subunit (LSU). Mature 70S chloroplast ribosomes of higher plants consist of a small (30S) and a large (50S) subunit. The 30S small subunit contains 1 molecule of ribosomal RNA (16S rRNA) and 24 different proteins. The 50S large subunit contains 3 rRNA molecules (23S, 5S and 4.5S rRNA) and 33 different proteins.

The protein localises to the plastid. Its subcellular location is the chloroplast. Its function is as follows. Component of the chloroplast ribosome (chloro-ribosome), a dedicated translation machinery responsible for the synthesis of chloroplast genome-encoded proteins, including proteins of the transcription and translation machinery and components of the photosynthetic apparatus. In Spinacia oleracea (Spinach), this protein is Large ribosomal subunit protein bL35c (RPL35).